The sequence spans 270 residues: 3-phenylpropionate-dihydrodiol/cinnamic acid-dihydrodiol dehydrogenase (270 aa).

An NAD(+)-binding site is contributed by 10–34 (FITGGGSGLGLALVERFIEEGAQVA). Ser-143 provides a ligand contact to substrate. Tyr-156 acts as the Proton acceptor in catalysis.

This sequence belongs to the short-chain dehydrogenases/reductases (SDR) family.

It catalyses the reaction 3-(cis-5,6-dihydroxycyclohexa-1,3-dien-1-yl)propanoate + NAD(+) = 3-(2,3-dihydroxyphenyl)propanoate + NADH + H(+). The catalysed reaction is (2E)-3-(cis-5,6-dihydroxycyclohexa-1,3-dien-1-yl)prop-2-enoate + NAD(+) = (2E)-3-(2,3-dihydroxyphenyl)prop-2-enoate + NADH + H(+). It functions in the pathway aromatic compound metabolism; 3-phenylpropanoate degradation. Its function is as follows. Converts 3-phenylpropionate-dihydrodiol (PP-dihydrodiol) and cinnamic acid-dihydrodiol (CI-dihydrodiol) into 3-(2,3-dihydroxylphenyl)propanoic acid (DHPP) and 2,3-dihydroxicinnamic acid (DHCI), respectively. In Escherichia coli O7:K1 (strain IAI39 / ExPEC), this protein is 3-phenylpropionate-dihydrodiol/cinnamic acid-dihydrodiol dehydrogenase.